The chain runs to 468 residues: Peroxisome proliferator-activated receptor alpha (468 aa).

A disordered region spans residues 1–20 (MVDTESQICPLSPFGDDDLE). Positions 99–173 (NIECRICGDK…DGMSHNAIRF (75 aa)) form a DNA-binding region, nuclear receptor. 2 NR C4-type zinc fingers span residues 102 to 122 (CRIC…CEGC) and 139 to 161 (CDRS…FQKC). Residues 239–466 (FVIHDMETLC…HPLLQEIYRD (228 aa)) enclose the NR LBD domain. The interval 304–433 (DQVTLLKYGV…PKLLQKMADL (130 aa)) is required for heterodimerization with RXRA.

It belongs to the nuclear hormone receptor family. NR1 subfamily. In terms of assembly, heterodimer; with RXRA. This heterodimerization is required for DNA binding and transactivation activity. Interacts with NCOA3 coactivator. Interacts with CITED2; the interaction stimulates its transcriptional activity. Also interacts with PPARBP in vitro. Interacts with AKAP13, LPIN1, PRDM16 and coactivator NCOA6. Interacts with ASXL1 and ASXL2. Interacts with PER2. Interacts with SIRT1; the interaction seems to be modulated by NAD(+) levels. Interacts with CRY1 and CRY2. In hepatocytes, interacts with PAQR3 and HUWE1; the interactions promote PPARA poylubiquitination and HUWE1-mediated degradation. In terms of processing, ubiquitinated by E3 ubiquitin-protein ligase HUWE1; leading to proteasomal degradation. Post-translationally, phosphorylated.

The protein localises to the nucleus. Ligand-activated transcription factor. Key regulator of lipid metabolism. Activated by the endogenous ligand 1-palmitoyl-2-oleoyl-sn-glycerol-3-phosphocholine (16:0/18:1-GPC). Activated by oleylethanolamide, a naturally occurring lipid that regulates satiety. Receptor for peroxisome proliferators such as hypolipidemic drugs and fatty acids. Regulates the peroxisomal beta-oxidation pathway of fatty acids. Functions as a transcription activator for the ACOX1 and P450 genes. Transactivation activity requires heterodimerization with RXRA and is antagonized by NR2C2. May be required for the propagation of clock information to metabolic pathways regulated by PER2. This is Peroxisome proliferator-activated receptor alpha (PPARA) from Phascolarctos cinereus (Koala).